A 554-amino-acid chain; its full sequence is Putative acyl-coenzyme A synthetase (554 aa).

Residue L195–K206 participates in AMP binding.

Belongs to the ATP-dependent AMP-binding enzyme family.

This Emericella nidulans (strain FGSC A4 / ATCC 38163 / CBS 112.46 / NRRL 194 / M139) (Aspergillus nidulans) protein is Putative acyl-coenzyme A synthetase.